Here is a 103-residue protein sequence, read N- to C-terminus: Iron-sulfur cluster assembly protein CyaY (103 aa).

Belongs to the frataxin family.

Functionally, involved in iron-sulfur (Fe-S) cluster assembly. May act as a regulator of Fe-S biogenesis. The polypeptide is Iron-sulfur cluster assembly protein CyaY (Rickettsia rickettsii (strain Iowa)).